Here is a 28-residue protein sequence, read N- to C-terminus: Glutathione S-transferase 5 (28 aa).

One can recognise a GST N-terminal domain in the interval 1–28 (PNYKLTYFNLRGRAEISRYLFAYAGIKY). Glutathione is bound at residue Tyr7.

Belongs to the GST superfamily. Sigma family. In terms of assembly, homodimer.

It localises to the cytoplasm. It catalyses the reaction RX + glutathione = an S-substituted glutathione + a halide anion + H(+). In terms of biological role, conjugation of reduced glutathione to a wide number of exogenous and endogenous hydrophobic electrophiles. This Gallus gallus (Chicken) protein is Glutathione S-transferase 5.